The primary structure comprises 399 residues: S-adenosylmethionine synthase (399 aa).

H17 is a binding site for ATP. D19 lines the Mg(2+) pocket. E45 contributes to the K(+) binding site. 2 residues coordinate L-methionine: E58 and Q101. The interval 101–111 (QSPDIAQGVDE) is flexible loop. ATP-binding positions include 177–179 (DAK), 244–245 (RF), D253, 259–260 (RK), A276, and K280. D253 provides a ligand contact to L-methionine. Residue K284 participates in L-methionine binding.

This sequence belongs to the AdoMet synthase family. Homotetramer; dimer of dimers. The cofactor is Mg(2+). K(+) serves as cofactor.

The protein resides in the cytoplasm. The enzyme catalyses L-methionine + ATP + H2O = S-adenosyl-L-methionine + phosphate + diphosphate. It functions in the pathway amino-acid biosynthesis; S-adenosyl-L-methionine biosynthesis; S-adenosyl-L-methionine from L-methionine: step 1/1. Its function is as follows. Catalyzes the formation of S-adenosylmethionine (AdoMet) from methionine and ATP. The overall synthetic reaction is composed of two sequential steps, AdoMet formation and the subsequent tripolyphosphate hydrolysis which occurs prior to release of AdoMet from the enzyme. In Listeria monocytogenes serovar 1/2a (strain ATCC BAA-679 / EGD-e), this protein is S-adenosylmethionine synthase.